The chain runs to 537 residues: Probable E3 ubiquitin-protein ligase ARI3 (537 aa).

The segment at 1–30 (MDDDYMMLDDDYGEEEDENYSEDDNYSEAE) is disordered. Positions 117 to 331 (KTMKCDVCME…IAGHSCGRYK (215 aa)) are TRIAD supradomain. Positions 121, 124, 139, 141, 144, 147, 166, 171, 210, 216, 234, 236, 241, 244, 249, 254, 281, and 284 each coordinate Zn(2+). The segment at 121 to 171 (CDVCMEDDLPSNVMTRMECGHRFCNDCWIGHFTVKINEGESKRILCMAHEC) adopts an RING-type 1 zinc-finger fold. The segment at 190-254 (DRYDRFLIES…LSESHSPCSC (65 aa)) adopts an IBR-type zinc-finger fold. The segment at 281-309 (CPKCSKPIQKRDGCNLMTCKCGQHFCWLC) adopts an RING-type 2; atypical zinc-finger fold. C294 is an active-site residue. 6 residues coordinate Zn(2+): C299, C301, C306, C309, H317, and C327.

Belongs to the RBR family. Ariadne subfamily. It depends on Zn(2+) as a cofactor. Ubiquitous.

It carries out the reaction [E2 ubiquitin-conjugating enzyme]-S-ubiquitinyl-L-cysteine + [acceptor protein]-L-lysine = [E2 ubiquitin-conjugating enzyme]-L-cysteine + [acceptor protein]-N(6)-ubiquitinyl-L-lysine.. It participates in protein modification; protein ubiquitination. Might act as an E3 ubiquitin-protein ligase, or as part of E3 complex, which accepts ubiquitin from specific E2 ubiquitin-conjugating enzymes and then transfers it to substrates. The sequence is that of Probable E3 ubiquitin-protein ligase ARI3 (ARI3) from Arabidopsis thaliana (Mouse-ear cress).